The following is a 475-amino-acid chain: Neuronal acetylcholine receptor subunit alpha-5 (475 aa).

Residues 1–29 form the signal peptide; it reads MAAPGWGRWVLGLGPLLLQVFLPFQLVAG. Residues 30–261 are Extracellular-facing; sequence RWGPEGAGGG…VIKRLPLFYT (232 aa). Residues Cys177 and Cys191 are joined by a disulfide bond. Residues Asn190 and Asn236 are each glycosylated (N-linked (GlcNAc...) asparagine). The cysteines at positions 241 and 242 are disulfide-linked. Transmembrane regions (helical) follow at residues 262–282, 289–309, and 324–344; these read LFLIIPCIGLSFLTVLVFYLP, ICLCTSVLVSLTVFLLVIEEI, and LVFTMIFVTLSIMVTVFAINI. The Cytoplasmic segment spans residues 345–437; the sequence is HHRSSSTHDA…KFIAQVLDRM (93 aa). The helical transmembrane segment at 438–458 threads the bilayer; the sequence is FLWTFLLVSVVGSLGLFVPVI. The Extracellular segment spans residues 459 to 475; it reads YKWANIIVPIHIGNENK.

This sequence belongs to the ligand-gated ion channel (TC 1.A.9) family. Acetylcholine receptor (TC 1.A.9.1) subfamily. Alpha-5/CHRNA5 sub-subfamily. As to quaternary structure, neuronal AChR that forms heteropentamers composed of two different type of subunits: alpha and non-alpha (beta). CHRNA5/alpha-5 subunit is only able to form functional nAChRs when co-assembled with another alpha subunit, can be combined to CHRNA4/alpha-4 or CHRNA3/alpha-3 and CHRNB4/beta-4 or CHRNB2/beta-2 to give rise to functional receptors. Interacts with LYPD6.

The protein localises to the synaptic cell membrane. It is found in the cell membrane. The enzyme catalyses Ca(2+)(in) = Ca(2+)(out). It catalyses the reaction K(+)(in) = K(+)(out). It carries out the reaction Na(+)(in) = Na(+)(out). With respect to regulation, activated by a myriad of ligands such as acetylcholine, cytisine, nicotine, choline and epibatidine. Its function is as follows. Component of neuronal acetylcholine receptors (nAChRs) that function as pentameric, ligand-gated cation channels with high calcium permeability among other activities. nAChRs are excitatory neurotrasnmitter receptors formed by a collection of nAChR subunits known to mediate synaptic transmission in the nervous system and the neuromuscular junction. Each nAchR subunit confers differential attributes to channel properties, including activation, deactivation and desensitization kinetics, pH sensitivity, cation permeability, and binding to allosteric modulators. Has an accessory rather than functional role and is only able to form functional nAChRs when co-assembled with another beta subunit. Participates in pentameric assemblies along with CHRNA3, CHRNA4, CHRNB2 and CHRNB4. Increases receptor sensitivity to acetylcholine and nicotine when associated with CHRNA4 and CHRNB2. Plays a role in nicotine addiction. The chain is Neuronal acetylcholine receptor subunit alpha-5 (CHRNA5) from Bos taurus (Bovine).